The following is a 363-amino-acid chain: Aminomethyltransferase (363 aa).

Belongs to the GcvT family. The glycine cleavage system is composed of four proteins: P, T, L and H.

The enzyme catalyses N(6)-[(R)-S(8)-aminomethyldihydrolipoyl]-L-lysyl-[protein] + (6S)-5,6,7,8-tetrahydrofolate = N(6)-[(R)-dihydrolipoyl]-L-lysyl-[protein] + (6R)-5,10-methylene-5,6,7,8-tetrahydrofolate + NH4(+). Functionally, the glycine cleavage system catalyzes the degradation of glycine. The polypeptide is Aminomethyltransferase (Dechloromonas aromatica (strain RCB)).